The following is a 445-amino-acid chain: tRNA-2-methylthio-N(6)-dimethylallyladenosine synthase (445 aa).

Residues 3–124 (KKLYIKTYGC…LPELISKVVR (122 aa)) enclose the MTTase N-terminal domain. 6 residues coordinate [4Fe-4S] cluster: Cys12, Cys48, Cys87, Cys162, Cys166, and Cys169. The 233-residue stretch at 148 to 380 (YPQGASSFIS…QQELATQQLA (233 aa)) folds into the Radical SAM core domain. The TRAM domain maps to 383 to 445 (QSCVGSTMRV…ALNSLTGEIL (63 aa)).

It belongs to the methylthiotransferase family. MiaB subfamily. As to quaternary structure, monomer. [4Fe-4S] cluster is required as a cofactor.

Its subcellular location is the cytoplasm. The catalysed reaction is N(6)-dimethylallyladenosine(37) in tRNA + (sulfur carrier)-SH + AH2 + 2 S-adenosyl-L-methionine = 2-methylsulfanyl-N(6)-dimethylallyladenosine(37) in tRNA + (sulfur carrier)-H + 5'-deoxyadenosine + L-methionine + A + S-adenosyl-L-homocysteine + 2 H(+). Functionally, catalyzes the methylthiolation of N6-(dimethylallyl)adenosine (i(6)A), leading to the formation of 2-methylthio-N6-(dimethylallyl)adenosine (ms(2)i(6)A) at position 37 in tRNAs that read codons beginning with uridine. This Rickettsia prowazekii (strain Madrid E) protein is tRNA-2-methylthio-N(6)-dimethylallyladenosine synthase.